The chain runs to 351 residues: tRNA-specific 2-thiouridylase MnmA 2 (351 aa).

ATP contacts are provided by residues 13–20 (GMSGGTDS) and Phe-39. Cys-98 functions as the Nucleophile in the catalytic mechanism. An intrachain disulfide couples Cys-98 to Cys-195. ATP is bound at residue Gly-122. An interaction with tRNA region spans residues 144–146 (KDQ). The active-site Cysteine persulfide intermediate is Cys-195. The interval 301–302 (RY) is interaction with tRNA.

This sequence belongs to the MnmA/TRMU family.

Its subcellular location is the cytoplasm. It catalyses the reaction S-sulfanyl-L-cysteinyl-[protein] + uridine(34) in tRNA + AH2 + ATP = 2-thiouridine(34) in tRNA + L-cysteinyl-[protein] + A + AMP + diphosphate + H(+). Catalyzes the 2-thiolation of uridine at the wobble position (U34) of tRNA, leading to the formation of s(2)U34. The chain is tRNA-specific 2-thiouridylase MnmA 2 from Phocaeicola vulgatus (strain ATCC 8482 / DSM 1447 / JCM 5826 / CCUG 4940 / NBRC 14291 / NCTC 11154) (Bacteroides vulgatus).